The following is a 346-amino-acid chain: MSLNKAVLEIRQRIKVKPSPTNEPAASWTGTDLVNGVQTKTLTVIFKSAGCRWGKAGGCTMCGYVYDCASEPPSLEDYMAQLEKAMRKAEKFPEFMVKIFTSGSFLDEQEVLPEARDAILKNLTEDPRVTKVLVETRPNYVTEENVQACLSILKNKPFELAFGLETSSDKIRRDSINKGFTFQDFVHAAETAKKYGVTVKVYLMLKPLFLSERQAMEDIIRSIDDAAPYADTISINLCNVQKGTLVEALWEKGQYRPPWLWSIIEILRQAKAAHPELPLMSDPVGAGSKRGPHNCKICSSEVADSLRTFSLTQNPADLSTADCECKELWKKVLEIEDFTYGTPILD.

Residues 36–276 (GVQTKTLTVI…LRQAKAAHPE (241 aa)) enclose the Radical SAM core domain. Residues C51, C59, and C62 each contribute to the [4Fe-4S] cluster site.

The protein belongs to the radical SAM superfamily. RaSEA family. In terms of assembly, forms a robust complex with the archaeosine synthase alpha subunit ArcS. This complex likely consists of an alpha(2)beta(2) heterotetrameric structure. [4Fe-4S] cluster serves as cofactor.

It carries out the reaction 7-N-[(5S)-5-amino-5-carboxypentyl]formamidino-7-deazaguanosine(15) in tRNA + S-adenosyl-L-methionine = archaeosine(15) in tRNA + L-1-piperideine-6-carboxylate + 5'-deoxyadenosine + L-methionine + 2 H(+). The protein operates within tRNA modification; archaeosine-tRNA biosynthesis. Its function is as follows. Radical SAM enzyme involved in the synthesis of archaeosine, a modified nucleoside present in the dihydrouridine loop (D-loop) of archaeal tRNAs. Catalyzes the cleavage of the C(epsilon)-N bond of the lysine moiety of q0kN15-tRNA, leading to the formation of archaeosine at position 15 in tRNAs. The protein is Archaeosine synthase subunit beta of Methanosarcina acetivorans (strain ATCC 35395 / DSM 2834 / JCM 12185 / C2A).